Here is a 227-residue protein sequence, read N- to C-terminus: MAGGTQGVAAIVPAAGSGQRLAAGVPKAFYQLEGQTLVERAVRGLLESGVVDTVVVAVPPDRTDEAKLILGREATIVAGGADRTESVSRALSALSAGVSPEFVLVHDAARALTPPALVVRLVDMLRAGHAAVVPVLPLTDTIKAVDANGVVLGTPERAGLRAVQTPQGFSTELLLRAYRHAGVAAFTDDASLVEHVGGQVHVVAGDPLAFKITNRLDLLLAHAVVRG.

This sequence belongs to the IspD/TarI cytidylyltransferase family. IspD subfamily.

The catalysed reaction is 2-C-methyl-D-erythritol 4-phosphate + CTP + H(+) = 4-CDP-2-C-methyl-D-erythritol + diphosphate. It functions in the pathway isoprenoid biosynthesis; isopentenyl diphosphate biosynthesis via DXP pathway; isopentenyl diphosphate from 1-deoxy-D-xylulose 5-phosphate: step 2/6. In terms of biological role, catalyzes the formation of 4-diphosphocytidyl-2-C-methyl-D-erythritol from CTP and 2-C-methyl-D-erythritol 4-phosphate (MEP). The sequence is that of 2-C-methyl-D-erythritol 4-phosphate cytidylyltransferase from Mycobacterium marinum (strain ATCC BAA-535 / M).